The sequence spans 433 residues: tRNA(Ile)-lysidine synthase (433 aa).

ATP is bound at residue 37–42 (SGGKDS).

It belongs to the tRNA(Ile)-lysidine synthase family.

It is found in the cytoplasm. It carries out the reaction cytidine(34) in tRNA(Ile2) + L-lysine + ATP = lysidine(34) in tRNA(Ile2) + AMP + diphosphate + H(+). Functionally, ligates lysine onto the cytidine present at position 34 of the AUA codon-specific tRNA(Ile) that contains the anticodon CAU, in an ATP-dependent manner. Cytidine is converted to lysidine, thus changing the amino acid specificity of the tRNA from methionine to isoleucine. This chain is tRNA(Ile)-lysidine synthase, found in Leptospira interrogans serogroup Icterohaemorrhagiae serovar Lai (strain 56601).